The primary structure comprises 509 residues: Maturase K (509 aa).

Belongs to the intron maturase 2 family. MatK subfamily.

The protein localises to the plastid. The protein resides in the chloroplast. Usually encoded in the trnK tRNA gene intron. Probably assists in splicing its own and other chloroplast group II introns. The polypeptide is Maturase K (Nicotiana paniculata).